Here is a 177-residue protein sequence, read N- to C-terminus: Peroxiredoxin-2 (177 aa).

An N-acetylalanine modification is found at A2. Residues 6–164 (ARIGKPAPDF…ALRLVQAFQY (159 aa)) form the Thioredoxin domain. Residue C51 is the Cysteine sulfenic acid (-SOH) intermediate of the active site. S112 is modified (phosphoserine).

This sequence belongs to the peroxiredoxin family. AhpC/Prx1 subfamily. Homodimer; disulfide-linked, upon oxidation. 5 homodimers assemble to form a ring-like decamer. Interacts with TIPIN. The enzyme can be inactivated by further oxidation of the cysteine sulfenic acid (C(P)-SOH) to sulphinic acid (C(P)-SO2H) instead of its condensation to a disulfide bond. It can be reactivated by forming a transient disulfide bond with sulfiredoxin SRXN1, which reduces the cysteine sulfinic acid in an ATP- and Mg-dependent manner. Post-translationally, acetylation increases resistance to transition to high molecular-mass complexes. Deacetylated by HDAC6 which decreases reducing activity.

The protein localises to the cytoplasm. It catalyses the reaction a hydroperoxide + [thioredoxin]-dithiol = an alcohol + [thioredoxin]-disulfide + H2O. Functionally, thiol-specific peroxidase that catalyzes the reduction of hydrogen peroxide and organic hydroperoxides to water and alcohols, respectively. Plays a role in cell protection against oxidative stress by detoxifying peroxides and as sensor of hydrogen peroxide-mediated signaling events. Might participate in the signaling cascades of growth factors and tumor necrosis factor-alpha by regulating the intracellular concentrations of H(2)O(2). The sequence is that of Peroxiredoxin-2 (PRDX2) from Pongo abelii (Sumatran orangutan).